The following is a 122-amino-acid chain: Basic phospholipase A2 (122 aa).

Disulfide bonds link cysteine 26/cysteine 115, cysteine 28/cysteine 44, cysteine 43/cysteine 95, cysteine 49/cysteine 122, cysteine 50/cysteine 88, cysteine 57/cysteine 81, and cysteine 75/cysteine 86. The Ca(2+) site is built by tyrosine 27, glycine 29, and glycine 31. Residue histidine 47 is part of the active site. Aspartate 48 contacts Ca(2+). The active site involves aspartate 89.

The protein belongs to the phospholipase A2 family. Group II subfamily. D49 sub-subfamily. Homodimer. Ca(2+) is required as a cofactor. As to expression, expressed by the venom gland.

It localises to the secreted. The catalysed reaction is a 1,2-diacyl-sn-glycero-3-phosphocholine + H2O = a 1-acyl-sn-glycero-3-phosphocholine + a fatty acid + H(+). Snake venom phospholipase A2 (PLA2) that inhibits neuromuscular transmission by blocking acetylcholine release from the nerve termini. PLA2 catalyzes the calcium-dependent hydrolysis of the 2-acyl groups in 3-sn-phosphoglycerides. The polypeptide is Basic phospholipase A2 (Gloydius blomhoffii (Mamushi)).